We begin with the raw amino-acid sequence, 609 residues long: Zinc metalloproteinase-disintegrin-like VAP2B (609 aa).

The N-terminal stretch at 1–20 (MIQVLLVTICLAAFPYQGSS) is a signal peptide. Positions 21–189 (IILESGNVND…KKASQLVVTA (169 aa)) are excised as a propeptide. At E190 the chain carries Pyrrolidone carboxylic acid (Glu). In terms of domain architecture, Peptidase M12B spans 198 to 393 (RFVELFLVVD…HNPECILNEP (196 aa)). Ca(2+) is bound by residues E201 and D285. Disulfide bonds link C308-C388, C348-C372, and C350-C355. H333 contributes to the Zn(2+) binding site. E334 is a catalytic residue. 2 residues coordinate Zn(2+): H337 and H343. Residue N371 is glycosylated (N-linked (GlcNAc...) asparagine). Ca(2+)-binding residues include C388, N391, V403, N406, L408, E410, E413, and D416. Positions 401–487 (PPVCGNELLE…ECPADVFHKN (87 aa)) constitute a Disintegrin domain. Intrachain disulfides connect C404-C423, C404-C433, C415-C428, C415-C433, C417-C423, C427-C450, C441-C447, C446-C472, C459-C479, C466-C491, C466-C498, C491-C503, C498-C503, C510-C525, C510-C560, C525-C571, C538-C548, C548-C555, C555-C597, C560-C571, C591-C602, and C597-C602. The interval 459-472 (CRASMSECDPAEHC) is inhibits platelet aggregation. A D/ECD-tripeptide motif is present at residues 465-467 (ECD). Residues D467, P468, E470, D482, and V483 each contribute to the Ca(2+) site.

This sequence belongs to the venom metalloproteinase (M12B) family. P-III subfamily. P-IIIb sub-subfamily. In terms of assembly, monomer or heterodimer; non-covalently linked. Interacts with fibrillar collagen. Zn(2+) is required as a cofactor. The N-terminus is blocked. In terms of tissue distribution, expressed by the venom gland.

It localises to the secreted. In terms of biological role, zinc metalloprotease that abolishes platelet aggregation induced by collagen, but has no effect on platelet aggregation induced by ADP or thromboxane analog. This inhibition may be due to its ability to bind collagen and block the binding site on collagen for platelets and/or to its ability to bind to the platelet alpha-2/beta-1 collagen receptor (ITGA2/ITGB1) to block its interaction with collagen and hence prevent platelet stimulation. Abolishes platelet aggregation induced by collagen (IC(50)=66 nM) but not ADP-stimulated platelet aggregation. This inhibition may be due to its ability to bind collagen and block the binding site on collagen for platelets and/or to its ability to bind to the platelet alpha-2/beta-1 collagen receptor (ITGA2/ITGB1) to block its interaction with collagen and hence prevent platelet stimulation. The chain is Zinc metalloproteinase-disintegrin-like VAP2B from Crotalus atrox (Western diamondback rattlesnake).